We begin with the raw amino-acid sequence, 681 residues long: 2-(S-pantetheinyl)-carbapenam-3-carboxylate methyltransferase (681 aa).

The 144-residue stretch at 1 to 144 (MTVPAARSGR…IERLADHPDY (144 aa)) folds into the B12-binding domain. Cob(II)alamin contacts are provided by asparagine 18, serine 72, tyrosine 74, valine 75, histidine 103, glycine 126, and glutamate 127. The Radical SAM core domain occupies 192–417 (RDLRFYALWE…RLYVEEPGTP (226 aa)). Cysteine 206 and cysteine 210 together coordinate [4Fe-4S] cluster. Phenylalanine 212 serves as a coordination point for 5'-deoxyadenosine. Cysteine 213 contacts [4Fe-4S] cluster. Residues aspartate 214 and cysteine 249 each coordinate cob(II)alamin. Residues glutamine 312, glutamate 349, and glycine 384 each coordinate 5'-deoxyadenosine.

This sequence belongs to the methyltransferase superfamily. [4Fe-4S] cluster serves as cofactor. Requires cob(II)alamin as cofactor.

It catalyses the reaction (2R,3R,5S)-2-(S-pantetheinyl)-carbapenam-3-carboxylate + AH2 + 2 S-adenosyl-L-methionine = (2R,3R,5S,6R)-6-(methyl)-2-(S-pantetheinyl)-carbapenam-3-carboxylate + 5'-deoxyadenosine + L-methionine + A + S-adenosyl-L-homocysteine + 2 H(+). It carries out the reaction (2R,3R,5S,6R)-6-(methyl)-2-(S-pantetheinyl)-carbapenam-3-carboxylate + AH2 + 2 S-adenosyl-L-methionine = (2R,3R,5S,6R)-6-(ethyl)-2-(S-pantetheinyl)-carbapenam-3-carboxylate + 5'-deoxyadenosine + L-methionine + A + S-adenosyl-L-homocysteine + 2 H(+). Its pathway is antibiotic biosynthesis. Functionally, methyltransferase involved in the biosynthesis of the beta-lactam carbapenem antibiotic thienamycin. Catalyzes two consecutive S-adenosyl-L-methionine-dependent methylations to build out the C6-ethyl side chain in a stereocontrolled manner. In vitro can use methyl viologen and NADPH as the iron-sulfur cluster reductants. The protein is 2-(S-pantetheinyl)-carbapenam-3-carboxylate methyltransferase of Streptantibioticus cattleyicolor (strain ATCC 35852 / DSM 46488 / JCM 4925 / NBRC 14057 / NRRL 8057) (Streptomyces cattleya).